Consider the following 825-residue polypeptide: BEN domain-containing protein 3 (825 aa).

Acidic residues predominate over residues 1–11 (MNSTEISEDVE). A disordered region spans residues 1–35 (MNSTEISEDVEEVLKNNPVKAEGSDATLDCSRNSR). Lys20 participates in a covalent cross-link: Glycyl lysine isopeptide (Lys-Gly) (interchain with G-Cter in SUMO); alternate. Lys20 is covalently cross-linked (Glycyl lysine isopeptide (Lys-Gly) (interchain with G-Cter in SUMO1); alternate). Lys20 participates in a covalent cross-link: Glycyl lysine isopeptide (Lys-Gly) (interchain with G-Cter in SUMO2); alternate. Residues Lys39, Lys54, Lys56, Lys71, Lys126, Lys127, Lys135, Lys140, Lys156, and Lys174 each participate in a glycyl lysine isopeptide (Lys-Gly) (interchain with G-Cter in SUMO2) cross-link. Positions 52 to 122 (SSKRKQLDSD…EEEPSTEATV (71 aa)) are disordered. The short motif at 54-56 (KRK) is the Nuclear localization signal element. A BEN 1 domain is found at 239 to 340 (PPPEYQLTAS…DFFSRFWAQR (102 aa)). Ser376 is modified (phosphoserine). One can recognise a BEN 2 domain in the interval 384-484 (ASDHVVDTQD…DELEGLGLEG (101 aa)). Lys424 participates in a covalent cross-link: Glycyl lysine isopeptide (Lys-Gly) (interchain with G-Cter in SUMO2). Position 486 is a phosphoserine (Ser486). Lys509 participates in a covalent cross-link: Glycyl lysine isopeptide (Lys-Gly) (interchain with G-Cter in SUMO); alternate. A Glycyl lysine isopeptide (Lys-Gly) (interchain with G-Cter in SUMO2); alternate cross-link involves residue Lys509. A Glycyl lysine isopeptide (Lys-Gly) (interchain with G-Cter in SUMO2) cross-link involves residue Lys525. Positions 547–647 (GSDCLLSKEQ…ERCRRRDTEQ (101 aa)) constitute a BEN 3 domain. Lys697 is covalently cross-linked (Glycyl lysine isopeptide (Lys-Gly) (interchain with G-Cter in SUMO2)). The region spanning 712–813 (VPSPYLLSDK…ERCRRPNRKK (102 aa)) is the BEN 4 domain.

In terms of assembly, homooligomer, probably a homooctamer. Interacts with HDAC2 and HDAC3, but not HDAC1. Interacts with SALL4. Interacts with SMARCA5/SNF2H, BAZ2A/TIP5 and USP21. Interacts with the nucleosome remodeling and histone deacetylase (NuRD) repressor complex. Interacts (via BEN domains 1 and 3) with ERCC6L (via N-terminal TPR repeat); the interaction is direct. Post-translationally, sumoylated at Lys-20 by SUMO1 and at Lys-509 by SUMO1, SUMO2 and SUMO3. Sumoylation probably occurs sequentially, with that of Lys-20 preceding that of Lys-509. It does not alter association with heterochromatin, but is required for the repression of transcription.

The protein resides in the nucleus. It is found in the nucleolus. Transcriptional repressor which associates with the NoRC (nucleolar remodeling complex) complex and plays a key role in repressing rDNA transcription. The sumoylated form modulates the stability of the NoRC complex component BAZ2A/TIP5 by controlling its USP21-mediated deubiquitination. Binds to unmethylated major satellite DNA and is involved in the recruitment of the Polycomb repressive complex 2 (PRC2) to major satellites. Stimulates the ERCC6L translocase and ATPase activities. This chain is BEN domain-containing protein 3 (Bend3), found in Mus musculus (Mouse).